Consider the following 211-residue polypeptide: Thymidylate kinase (211 aa).

7–14 is a binding site for ATP; that stretch reads GIDASGKS.

This sequence belongs to the thymidylate kinase family.

The catalysed reaction is dTMP + ATP = dTDP + ADP. In terms of biological role, phosphorylation of dTMP to form dTDP in both de novo and salvage pathways of dTTP synthesis. This is Thymidylate kinase from Mesomycoplasma hyopneumoniae (strain 232) (Mycoplasma hyopneumoniae).